We begin with the raw amino-acid sequence, 242 residues long: tRNA pseudouridine synthase A (242 aa).

Residue Asp51 is the Nucleophile of the active site. Residue Tyr107 coordinates substrate.

Belongs to the tRNA pseudouridine synthase TruA family. As to quaternary structure, homodimer.

It catalyses the reaction uridine(38/39/40) in tRNA = pseudouridine(38/39/40) in tRNA. Functionally, formation of pseudouridine at positions 38, 39 and 40 in the anticodon stem and loop of transfer RNAs. In Helicobacter pylori (strain G27), this protein is tRNA pseudouridine synthase A.